A 452-amino-acid polypeptide reads, in one-letter code: MPEFLEDPSVLTKDKLKSELVANNVTLPAGEQRKDVYVQLYLQHLTARNRPPLAAGANSKGPPDFSSDEEREPTPVLGSGASVGRGRGAVGRKATKKTDKPRPEDKDDLDVTELSNEELLEQLVRYGVNPGPIVGTTRKLYEKKLLKLREQGAESRSSTPLPTVSSSAENTRQNGSNDSDRYSDNDEDSKIELKLEKREPLKGRAKTPVTLKQRRIEHNQSYSEAGVTETEWTSGSSKGGPLQALTRESTRGSRRTPRRRVEPSQHFRVDGAVISESTPIAETIKASSNDSLVANRLTGNFKHASSILPITEFSDITRRTPKKPLTRAEVGEKTEERRVERDILKEMFPYEASTPTGISASCRRPIKGAAGRPLELSDFRMEESFSSKYVPKYVPLADVKSEKTKKGRSVPMWIKMLLFALVAGFLFLVYQAMETNQGNPFTNFLQDTKISN.

A nucleoplasmic region spans residues 1–409; that stretch reads MPEFLEDPSV…KSEKTKKGRS (409 aa). Residues 5 to 48 form the LEM-like domain; sequence LEDPSVLTKDKLKSELVANNVTLPAGEQRKDVYVQLYLQHLTAR. Disordered regions lie at residues 48–113 and 149–264; these read RNRP…DVTE and REQG…VEPS. A linker region spans residues 49 to 107; that stretch reads NRPPLAAGANSKGPPDFSSDEEREPTPVLGSGASVGRGRGAVGRKATKKTDKPRPEDKD. Phosphoserine is present on residues S66 and S67. T74 is subject to Phosphothreonine. A Phosphoserine modification is found at S82. 2 positions are modified to omega-N-methylarginine: R85 and R87. Basic and acidic residues predominate over residues 96–105; sequence KKTDKPRPED. The LEM domain occupies 108–152; that stretch reads DLDVTELSNEELLEQLVRYGVNPGPIVGTTRKLYEKKLLKLREQG. An NAKAP95-binding N region spans residues 137 to 242; sequence TRKLYEKKLL…TSGSSKGGPL (106 aa). Polar residues predominate over residues 154-177; it reads ESRSSTPLPTVSSSAENTRQNGSN. S155 and S158 each carry phosphoserine. Residue T159 is modified to Phosphothreonine. S165, S167, S176, S179, and S183 each carry phosphoserine. Residues 178-202 are compositionally biased toward basic and acidic residues; sequence DSDRYSDNDEDSKIELKLEKREPLK. The residue at position 206 (K206) is an N6-acetyllysine. Residues 298–370 form a binds lamins B region; sequence TGNFKHASSI…SCRRPIKGAA (73 aa). Residues 299–373 form an NAKAP95-binding C region; sequence GNFKHASSIL…RPIKGAAGRP (75 aa). 3 positions are modified to phosphoserine: S305, S306, and S361. Residue K388 is modified to N6-acetyllysine. Residues 410-430 form a helical; Signal-anchor for type II membrane protein membrane-spanning segment; the sequence is VPMWIKMLLFALVAGFLFLVY. The Lumenal segment spans residues 431 to 452; the sequence is QAMETNQGNPFTNFLQDTKISN.

Belongs to the LEM family. In terms of assembly, interacts with LMNB1, LMNB2, BANF1, AKAP8L, GMCL and chromosomes. Mitosis-specific phosphorylation specifically abolishes its binding to lamin B and chromosomes.

It is found in the nucleus inner membrane. The protein resides in the chromosome. Functionally, binds directly to lamin B1 and chromosomes in a mitotic phosphorylation-regulated manner. May play an important role in nuclear envelope reassembly at the end of mitosis and/or anchoring of the nuclear lamina and interphase chromosomes to the nuclear envelope. The chain is Lamina-associated polypeptide 2, isoform beta (Tmpo) from Rattus norvegicus (Rat).